Here is a 253-residue protein sequence, read N- to C-terminus: Snake venom serine protease homolog HS120 (253 aa).

An N-terminal signal peptide occupies residues 1 to 18 (MVLIRVIANLLILQLSYA). Positions 19–24 (QKSSEL) are excised as a propeptide. The Peptidase S1 domain maps to 25–244 (VIGGDECNIN…YLPWIQSIIA (220 aa)). 6 disulfides stabilise this stretch: Cys31/Cys158, Cys49/Cys65, Cys98/Cys251, Cys137/Cys205, Cys169/Cys184, and Cys195/Cys220. Residues Asn116 and Asn165 are each glycosylated (N-linked (GlcNAc...) asparagine).

It belongs to the peptidase S1 family. Snake venom subfamily. As to expression, expressed by the venom gland.

Its subcellular location is the secreted. Its function is as follows. Snake venom serine protease homolog that may act in the hemostasis system of the prey. This chain is Snake venom serine protease homolog HS120, found in Bothrops jararaca (Jararaca).